The sequence spans 532 residues: L-proline--[L-prolyl-carrier protein] ligase (532 aa).

Residues 510–532 (KTDYRRLGLDAPPRPAAPLGTAR) form a disordered region.

It belongs to the ATP-dependent AMP-binding enzyme family.

It catalyses the reaction holo-[peptidyl-carrier protein] + L-proline + ATP = L-prolyl-[peptidyl-carrier protein] + AMP + diphosphate. Its function is as follows. Involved in the biosynthesis of undecylprodigiosin. Catalyzes the conversion of L-proline to L-prolyl-AMP and the transfer of the L-prolyl group to acyl carrier protein RedO. This is L-proline--[L-prolyl-carrier protein] ligase from Streptomyces coelicolor (strain ATCC BAA-471 / A3(2) / M145).